The following is a 148-amino-acid chain: Deoxyuridine 5'-triphosphate nucleotidohydrolase (148 aa).

Substrate contacts are provided by residues 67 to 69, Asn80, 84 to 86, and Met94; these read RSG and LID.

Belongs to the dUTPase family. Mg(2+) serves as cofactor.

The enzyme catalyses dUTP + H2O = dUMP + diphosphate + H(+). The protein operates within pyrimidine metabolism; dUMP biosynthesis; dUMP from dCTP (dUTP route): step 2/2. This enzyme is involved in nucleotide metabolism: it produces dUMP, the immediate precursor of thymidine nucleotides and it decreases the intracellular concentration of dUTP so that uracil cannot be incorporated into DNA. The sequence is that of Deoxyuridine 5'-triphosphate nucleotidohydrolase from Paraburkholderia phytofirmans (strain DSM 17436 / LMG 22146 / PsJN) (Burkholderia phytofirmans).